Reading from the N-terminus, the 341-residue chain is G2/mitotic-specific cyclin C13-1 (341 aa).

It belongs to the cyclin family. Cyclin AB subfamily.

In terms of biological role, essential for the control of the cell cycle at the G2/M (mitosis) transition. Interacts with the CDC2 and CDK2 protein kinases to form MPF. G2/M cyclins accumulate steadily during G2 and are abruptly destroyed at mitosis. In Daucus carota (Wild carrot), this protein is G2/mitotic-specific cyclin C13-1.